Here is a 336-residue protein sequence, read N- to C-terminus: Type II methyltransferase M.PvuII (336 aa).

2 repeat units span residues 11-113 and 181-293. Positions 196 to 215 are disordered; it reads TPKTRPSGHDIGKSFSKDNG. The span at 202-211 shows a compositional bias: basic and acidic residues; the sequence is SGHDIGKSFS.

It belongs to the N(4)/N(6)-methyltransferase family. N(4) subfamily. Monomer.

The enzyme catalyses a 2'-deoxycytidine in DNA + S-adenosyl-L-methionine = an N(4)-methyl-2'-deoxycytidine in DNA + S-adenosyl-L-homocysteine + H(+). Its function is as follows. A beta subtype methylase, recognizes the double-stranded sequence 5'-CAGCTG-3', methylates C-4 on both strands, and protects the DNA from cleavage by the PvuII endonuclease. This chain is Type II methyltransferase M.PvuII, found in Proteus hauseri.